The sequence spans 66 residues: MKLIHVLAALPFIGILLGIPFANKVTPYVFGMPFILAYIVMWALLTSALMAIVYVLDKENKKEEAE.

A run of 2 helical transmembrane segments spans residues 3–23 and 34–54; these read LIHVLAALPFIGILLGIPFAN and FILAYIVMWALLTSALMAIVY.

It localises to the cell membrane. This is an uncharacterized protein from Bacillus subtilis (strain 168).